Here is an 82-residue protein sequence, read N- to C-terminus: MAKVDQITKKRAMTGNTRSHALNHSRRRWDLNLQKVKIYDENNNIVEVKVTARTLKGLKKNNKVVKVDYSKPAKVYGQNSPK.

Residues 1–25 (MAKVDQITKKRAMTGNTRSHALNHS) form a disordered region.

It belongs to the bacterial ribosomal protein bL28 family.

The protein is Large ribosomal subunit protein bL28 of Malacoplasma penetrans (strain HF-2) (Mycoplasma penetrans).